The following is a 1568-amino-acid chain: Kielin/chordin-like protein (1568 aa).

The N-terminal stretch at 1 to 23 (MAGVGAAALSLLLHLGALALAAG) is a signal peptide. Positions 27–49 (GAVPREPPGQQTTAHSSVLAGNS) are disordered. The span at 35–49 (GQQTTAHSSVLAGNS) shows a compositional bias: polar residues. The stretch at 60 to 87 (LGRLEAAVMELREQNKDLQTRVRQLESC) forms a coiled coil. VWFC domains are found at residues 136-193 (RGCS…PICR), 194-253 (PGCD…PTCQ), 253-312 (QGCT…PVCD), 312-370 (DGCF…PVCD), 426-485 (PACE…PSCD), 485-544 (DSCT…PRCP), 544-602 (PDCI…NDCS), 602-661 (SGCA…PQCP), 667-725 (AGCP…PSCD), 725-782 (DGCL…PDCD), 782-841 (DGCE…PTCQ), 900-959 (HSCL…PRCR), 959-1017 (RGCL…PQCS), 1017-1085 (SDCE…PTCA), 1082-1145 (PTCA…PVCR), and 1149-1209 (QSCV…PRCL). N-linked (GlcNAc...) asparagine glycosylation occurs at Asn-340. N-linked (GlcNAc...) asparagine glycosylation occurs at Asn-499. Residue Asn-1090 is glycosylated (N-linked (GlcNAc...) asparagine). A VWFD domain is found at 1213–1389 (ASCMAFGDPH…EGLWPGRPCS (177 aa)). Intrachain disulfides connect Cys-1215–Cys-1347 and Cys-1237–Cys-1388. The 61-residue stretch at 1483–1543 (CPLERGFVFD…EAHCIPPEAC (61 aa)) folds into the TIL domain.

In terms of assembly, interacts with BMP7 and, by doing so, enhances binding to the type I receptors that contains cytoplasmic serine/threonine protein kinase domains. Also able to interact with activin-A and TGFB1.

Its subcellular location is the secreted. In terms of biological role, enhances bone morphogenetic protein (BMP) signaling in a paracrine manner. In contrast, it inhibits both the activin-A and TGFB1-mediated signaling pathways. This chain is Kielin/chordin-like protein, found in Homo sapiens (Human).